A 173-amino-acid chain; its full sequence is Crossover junction endodeoxyribonuclease RuvC (173 aa).

Active-site residues include D8, E67, and D139. D8, E67, and D139 together coordinate Mg(2+).

Belongs to the RuvC family. Homodimer which binds Holliday junction (HJ) DNA. The HJ becomes 2-fold symmetrical on binding to RuvC with unstacked arms; it has a different conformation from HJ DNA in complex with RuvA. In the full resolvosome a probable DNA-RuvA(4)-RuvB(12)-RuvC(2) complex forms which resolves the HJ. Mg(2+) serves as cofactor.

Its subcellular location is the cytoplasm. The enzyme catalyses Endonucleolytic cleavage at a junction such as a reciprocal single-stranded crossover between two homologous DNA duplexes (Holliday junction).. The RuvA-RuvB-RuvC complex processes Holliday junction (HJ) DNA during genetic recombination and DNA repair. Endonuclease that resolves HJ intermediates. Cleaves cruciform DNA by making single-stranded nicks across the HJ at symmetrical positions within the homologous arms, yielding a 5'-phosphate and a 3'-hydroxyl group; requires a central core of homology in the junction. The consensus cleavage sequence is 5'-(A/T)TT(C/G)-3'. Cleavage occurs on the 3'-side of the TT dinucleotide at the point of strand exchange. HJ branch migration catalyzed by RuvA-RuvB allows RuvC to scan DNA until it finds its consensus sequence, where it cleaves and resolves the cruciform DNA. In Erwinia tasmaniensis (strain DSM 17950 / CFBP 7177 / CIP 109463 / NCPPB 4357 / Et1/99), this protein is Crossover junction endodeoxyribonuclease RuvC.